Reading from the N-terminus, the 227-residue chain is Urease accessory protein UreF (227 aa).

Belongs to the UreF family. In terms of assembly, ureD, UreF and UreG form a complex that acts as a GTP-hydrolysis-dependent molecular chaperone, activating the urease apoprotein by helping to assemble the nickel containing metallocenter of UreC. The UreE protein probably delivers the nickel.

The protein resides in the cytoplasm. In terms of biological role, required for maturation of urease via the functional incorporation of the urease nickel metallocenter. This chain is Urease accessory protein UreF, found in Bacillus sp. (strain TB-90).